A 160-amino-acid polypeptide reads, in one-letter code: Eosinophil cationic protein (160 aa).

The signal sequence occupies residues 1–27 (MVPKLFTSQICLLLLLGLMGVEGSLHA). A required for nearly all of the bactericidal activities; partially involved in LPS-binding region spans residues 28–72 (RPPQFTKAQWFAIQHINVNPPRCTIAMRVINNYQRRCKNQNTFLR). H42 (proton acceptor) is an active-site residue. 4 disulfide bridges follow: C50–C110, C64–C123, C82–C138, and C89–C98. Position 60 is a 3'-nitrotyrosine (Y60). 65 to 69 (KNQNT) serves as a coordination point for substrate. N-linked (GlcNAc...) asparagine glycans are attached at residues N92 and N119. The active-site Proton donor is H155.

It belongs to the pancreatic ribonuclease family. As to quaternary structure, interacts with bacterial lipopolysaccharide (LPS) and lipoteichoic acid (LTA). In vitro interacts with phospholipid bilayers.

Its subcellular location is the secreted. Cytotoxin and helminthotoxin with low-efficiency ribonuclease activity. Possesses a wide variety of biological activities. Exhibits antibacterial activity. The sequence is that of Eosinophil cationic protein (RNASE3) from Macaca fascicularis (Crab-eating macaque).